A 320-amino-acid polypeptide reads, in one-letter code: MARNKIALIGSGMIGGTLAHLAGLKELGDVVLFDIAEGTPQGKGLDIAESSPVDGFDAKFTGANDYAAIEGADVVIVTAGVPRKPGMSRDDLLGINLKVMEQVGAGIKKYAPEAFVICITNPLDAMVWALQKFSGLPAHKVVGMAGVLDSARFRYFLSEEFNVSVEDVTAFVLGGHGDSMVPLARYSTVAGIPLSDLVKMGWTSQDKLDKIIQRTRDGGAEIVGLLKTGSAFYAPAASAIQMAESYLKDKKRVLPVAAQLSGQYGVKDMYVGVPTVIGANGVERIIEIDLDKDEKAQFDKSVASVAGLCEACIGIAPSLK.

NAD(+)-binding positions include 10–15 (GSGMIG) and Asp34. The substrate site is built by Arg83 and Arg89. NAD(+) contacts are provided by residues Asn96 and 119 to 121 (ITN). Positions 121 and 152 each coordinate substrate. The active-site Proton acceptor is the His176.

This sequence belongs to the LDH/MDH superfamily. MDH type 3 family.

It catalyses the reaction (S)-malate + NAD(+) = oxaloacetate + NADH + H(+). Functionally, catalyzes the reversible oxidation of malate to oxaloacetate. In Brucella melitensis biotype 1 (strain ATCC 23456 / CCUG 17765 / NCTC 10094 / 16M), this protein is Malate dehydrogenase.